Consider the following 447-residue polypeptide: Kynureninase (447 aa).

Pyridoxal 5'-phosphate is bound by residues L106, T107, F134–D137, D220, H223, and Y245. At K246 the chain carries N6-(pyridoxal phosphate)lysine. 2 residues coordinate pyridoxal 5'-phosphate: W275 and N303.

The protein belongs to the kynureninase family. As to quaternary structure, homodimer. Pyridoxal 5'-phosphate serves as cofactor.

It is found in the cytoplasm. It catalyses the reaction L-kynurenine + H2O = anthranilate + L-alanine + H(+). It carries out the reaction 3-hydroxy-L-kynurenine + H2O = 3-hydroxyanthranilate + L-alanine + H(+). The protein operates within amino-acid degradation; L-kynurenine degradation; L-alanine and anthranilate from L-kynurenine: step 1/1. It participates in cofactor biosynthesis; NAD(+) biosynthesis; quinolinate from L-kynurenine: step 2/3. Its function is as follows. Catalyzes the cleavage of L-kynurenine (L-Kyn) and L-3-hydroxykynurenine (L-3OHKyn) into anthranilic acid (AA) and 3-hydroxyanthranilic acid (3-OHAA), respectively. In Eremothecium gossypii (strain ATCC 10895 / CBS 109.51 / FGSC 9923 / NRRL Y-1056) (Yeast), this protein is Kynureninase.